Consider the following 166-residue polypeptide: Regulatory protein RecX (166 aa).

This sequence belongs to the RecX family.

The protein resides in the cytoplasm. In terms of biological role, modulates RecA activity. The polypeptide is Regulatory protein RecX (Escherichia coli O139:H28 (strain E24377A / ETEC)).